Consider the following 398-residue polypeptide: E3 ubiquitin-protein ligase ATL6 (398 aa).

Residues 1–29 (MRSSDHMAFAGVLPIVFLLILSSADLAAS) form the signal peptide. Residues 50-70 (AVIVVILIAALFFMGFFSIYF) traverse the membrane as a helical segment. The segment at 128-170 (CAICLNEFEDDETLRLLPKCDHVFHPHCIDAWLEAHVTCPVCR) adopts an RING-type; atypical zinc-finger fold. Position 278 is a phosphoserine (Ser-278). Positions 368 to 398 (PRGGVNKDGEGTSVKSTGASGSTSGSVRLPV) are disordered. Residues 378-398 (GTSVKSTGASGSTSGSVRLPV) are compositionally biased toward low complexity.

It belongs to the RING-type zinc finger family. ATL subfamily.

The protein resides in the membrane. It carries out the reaction S-ubiquitinyl-[E2 ubiquitin-conjugating enzyme]-L-cysteine + [acceptor protein]-L-lysine = [E2 ubiquitin-conjugating enzyme]-L-cysteine + N(6)-ubiquitinyl-[acceptor protein]-L-lysine.. It participates in protein modification; protein ubiquitination. In terms of biological role, E3 ubiquitin-protein ligase able to catalyze polyubiquitination with ubiquitin-conjugating enzyme E2 UBC8 in vitro. May be involved in the plant C/N response and the early steps of the plant defense signaling pathway. In Arabidopsis thaliana (Mouse-ear cress), this protein is E3 ubiquitin-protein ligase ATL6 (ATL6).